Reading from the N-terminus, the 183-residue chain is MKSIYITGYKPYELNIFNNKQPEVRYIKLFLQQKLKEYIEDGLEWVIIEGQLGVELWAAEVVIRLKKMYDVKLSIITPFLEHHSKWNEENQLYYNQICARADFITSAHNDIYRGGFQFRNTDQFVLDNTEGTILFYDDEHEASPKFFKQTLIDFASENQYNIDVVTLEDLSDFVNEYMRAKEY.

It belongs to the UPF0398 family.

This is UPF0398 protein MCCL_1095 from Macrococcus caseolyticus (strain JCSC5402) (Macrococcoides caseolyticum).